The following is a 356-amino-acid chain: GTPase Obg (356 aa).

The Obg domain maps to 2-160; that stretch reads ESFVDEVAIE…KFLRLSLKLL (159 aa). The OBG-type G domain occupies 161–329; sequence ADVGIVGLPN…LLENMDEVFF (169 aa). GTP is bound by residues 167 to 174, 192 to 196, 215 to 218, 282 to 285, and 310 to 312; these read GLPNAGKS, FTTLS, DIPG, NKID, and SAD. Mg(2+)-binding residues include Ser174 and Thr194.

The protein belongs to the TRAFAC class OBG-HflX-like GTPase superfamily. OBG GTPase family. As to quaternary structure, monomer. The cofactor is Mg(2+).

It localises to the cytoplasm. Functionally, an essential GTPase which binds GTP, GDP and possibly (p)ppGpp with moderate affinity, with high nucleotide exchange rates and a fairly low GTP hydrolysis rate. Plays a role in control of the cell cycle, stress response, ribosome biogenesis and in those bacteria that undergo differentiation, in morphogenesis control. The protein is GTPase Obg of Leptospira interrogans serogroup Icterohaemorrhagiae serovar copenhageni (strain Fiocruz L1-130).